Here is a 124-residue protein sequence, read N- to C-terminus: NADH dehydrogenase [ubiquinone] 1 alpha subcomplex subunit 6 (124 aa).

This sequence belongs to the complex I LYR family.

The protein resides in the mitochondrion inner membrane. Accessory subunit of the mitochondrial membrane respiratory chain NADH dehydrogenase (Complex I), that is believed to be not involved in catalysis. Complex I functions in the transfer of electrons from NADH to the respiratory chain. The immediate electron acceptor for the enzyme is believed to be ubiquinone. This Dictyostelium discoideum (Social amoeba) protein is NADH dehydrogenase [ubiquinone] 1 alpha subcomplex subunit 6 (ndufa6).